We begin with the raw amino-acid sequence, 61 residues long: Small ribosomal subunit protein uS14 (61 aa).

Zn(2+) is bound by residues C24, C27, C40, and C43.

This sequence belongs to the universal ribosomal protein uS14 family. Zinc-binding uS14 subfamily. As to quaternary structure, part of the 30S ribosomal subunit. Contacts proteins S3 and S10. The cofactor is Zn(2+).

Its function is as follows. Binds 16S rRNA, required for the assembly of 30S particles and may also be responsible for determining the conformation of the 16S rRNA at the A site. The protein is Small ribosomal subunit protein uS14 of Thermosipho melanesiensis (strain DSM 12029 / CIP 104789 / BI429).